The chain runs to 372 residues: tRNA-specific 2-thiouridylase MnmA (372 aa).

Residues 13 to 20 and M39 each bind ATP; that span reads GMSGGVDS. The tract at residues 99 to 101 is interaction with target base in tRNA; sequence NPD. C104 (nucleophile) is an active-site residue. C104 and C200 are oxidised to a cystine. G128 contacts ATP. An interaction with tRNA region spans residues 150–152; that stretch reads KDQ. The active-site Cysteine persulfide intermediate is the C200. The tract at residues 310 to 311 is interaction with tRNA; it reads RY.

It belongs to the MnmA/TRMU family.

The protein localises to the cytoplasm. It catalyses the reaction S-sulfanyl-L-cysteinyl-[protein] + uridine(34) in tRNA + AH2 + ATP = 2-thiouridine(34) in tRNA + L-cysteinyl-[protein] + A + AMP + diphosphate + H(+). In terms of biological role, catalyzes the 2-thiolation of uridine at the wobble position (U34) of tRNA, leading to the formation of s(2)U34. This Bacillus pumilus (strain SAFR-032) protein is tRNA-specific 2-thiouridylase MnmA.